A 397-amino-acid chain; its full sequence is Acetate kinase 1 (397 aa).

Residue N8 coordinates Mg(2+). Residue K15 coordinates ATP. R89 contributes to the substrate binding site. The active-site Proton donor/acceptor is the D146. Residues 206–210 (HLGNG), 281–283 (DLR), and 329–333 (GIGEN) contribute to the ATP site. E382 contributes to the Mg(2+) binding site.

This sequence belongs to the acetokinase family. In terms of assembly, homodimer. The cofactor is Mg(2+). Mn(2+) serves as cofactor.

The protein resides in the cytoplasm. The enzyme catalyses acetate + ATP = acetyl phosphate + ADP. It participates in metabolic intermediate biosynthesis; acetyl-CoA biosynthesis; acetyl-CoA from acetate: step 1/2. In terms of biological role, catalyzes the formation of acetyl phosphate from acetate and ATP. Can also catalyze the reverse reaction. The polypeptide is Acetate kinase 1 (Listeria monocytogenes serovar 1/2a (strain ATCC BAA-679 / EGD-e)).